The primary structure comprises 499 residues: T-cell activation inhibitor, mitochondrial (499 aa).

A coiled-coil region spans residues 206–233; that stretch reads LRNSLPLRKELDRLKNELSELLQLSDIR.

Expressed in peripheral blood leukocytes, mainly in T-lymphocytes.

The protein localises to the mitochondrion. Its function is as follows. May regulate T-cell apoptosis. The sequence is that of T-cell activation inhibitor, mitochondrial (TCAIM) from Mus musculus (Mouse).